Here is a 408-residue protein sequence, read N- to C-terminus: Imidazolonepropionase (408 aa).

2 residues coordinate Fe(3+): His-73 and His-75. Residues His-73 and His-75 each coordinate Zn(2+). The 4-imidazolone-5-propanoate site is built by Arg-82, Tyr-145, and His-178. Tyr-145 is an N-formimidoyl-L-glutamate binding site. His-243 serves as a coordination point for Fe(3+). His-243 serves as a coordination point for Zn(2+). A 4-imidazolone-5-propanoate-binding site is contributed by Gln-246. Residue Asp-318 participates in Fe(3+) binding. Asp-318 lines the Zn(2+) pocket. N-formimidoyl-L-glutamate contacts are provided by Asn-320 and Gly-322. A 4-imidazolone-5-propanoate-binding site is contributed by Ser-323.

Belongs to the metallo-dependent hydrolases superfamily. HutI family. The cofactor is Zn(2+). Fe(3+) is required as a cofactor.

It is found in the cytoplasm. It carries out the reaction 4-imidazolone-5-propanoate + H2O = N-formimidoyl-L-glutamate. It functions in the pathway amino-acid degradation; L-histidine degradation into L-glutamate; N-formimidoyl-L-glutamate from L-histidine: step 3/3. Functionally, catalyzes the hydrolytic cleavage of the carbon-nitrogen bond in imidazolone-5-propanoate to yield N-formimidoyl-L-glutamate. It is the third step in the universal histidine degradation pathway. The protein is Imidazolonepropionase of Shewanella sediminis (strain HAW-EB3).